A 547-amino-acid chain; its full sequence is Type I inositol polyphosphate 5-phosphatase 4 (547 aa).

The segment covering 56–67 (CSVRKSKTETRS) has biased composition (basic and acidic residues). The segment at 56 to 80 (CSVRKSKTETRSKRNSGRARRNKLD) is disordered. Catalytic stretches follow at residues 387-402 (DRVIWLGDLNYRIALS) and 467-482 (KRRTPAWCDRILWHGS).

The protein belongs to the inositol polyphosphate 5-phosphatase family.

This is Type I inositol polyphosphate 5-phosphatase 4 from Arabidopsis thaliana (Mouse-ear cress).